Reading from the N-terminus, the 263-residue chain is Putative S-adenosyl-L-methionine-dependent methyltransferase Mjls_0079 (263 aa).

Residues Asp-121 and 150-151 contribute to the S-adenosyl-L-methionine site; that span reads ES.

Belongs to the UPF0677 family.

In terms of biological role, exhibits S-adenosyl-L-methionine-dependent methyltransferase activity. This is Putative S-adenosyl-L-methionine-dependent methyltransferase Mjls_0079 from Mycobacterium sp. (strain JLS).